A 636-amino-acid polypeptide reads, in one-letter code: 1-deoxy-D-xylulose-5-phosphate synthase (636 aa).

Thiamine diphosphate-binding positions include H75 and 116 to 118 (AHS). D147 serves as a coordination point for Mg(2+). Residues 148–149 (GA), N177, Y288, and E370 each bind thiamine diphosphate. Position 177 (N177) interacts with Mg(2+).

This sequence belongs to the transketolase family. DXPS subfamily. In terms of assembly, homodimer. Mg(2+) serves as cofactor. It depends on thiamine diphosphate as a cofactor.

The catalysed reaction is D-glyceraldehyde 3-phosphate + pyruvate + H(+) = 1-deoxy-D-xylulose 5-phosphate + CO2. Its pathway is metabolic intermediate biosynthesis; 1-deoxy-D-xylulose 5-phosphate biosynthesis; 1-deoxy-D-xylulose 5-phosphate from D-glyceraldehyde 3-phosphate and pyruvate: step 1/1. Its function is as follows. Catalyzes the acyloin condensation reaction between C atoms 2 and 3 of pyruvate and glyceraldehyde 3-phosphate to yield 1-deoxy-D-xylulose-5-phosphate (DXP). This chain is 1-deoxy-D-xylulose-5-phosphate synthase, found in Ralstonia pickettii (strain 12J).